A 1095-amino-acid polypeptide reads, in one-letter code: DNA-directed RNA polymerase subunit beta'' (1095 aa).

Positions 220, 293, 300, and 303 each coordinate Zn(2+).

The protein belongs to the RNA polymerase beta' chain family. RpoC2 subfamily. In plastids the minimal PEP RNA polymerase catalytic core is composed of four subunits: alpha, beta, beta', and beta''. When a (nuclear-encoded) sigma factor is associated with the core the holoenzyme is formed, which can initiate transcription. Zn(2+) serves as cofactor.

The protein localises to the plastid. It is found in the chloroplast. The catalysed reaction is RNA(n) + a ribonucleoside 5'-triphosphate = RNA(n+1) + diphosphate. Its function is as follows. DNA-dependent RNA polymerase catalyzes the transcription of DNA into RNA using the four ribonucleoside triphosphates as substrates. In Zygnema circumcarinatum (Green alga), this protein is DNA-directed RNA polymerase subunit beta''.